The following is a 681-amino-acid chain: Rabphilin-3A (681 aa).

The tract at residues 1-21 (MTDTVVNRWMYPGDGPLQSND) is disordered. A RabBD domain is found at 40–157 (QRKQEELTDE…KRSGAWFFKG (118 aa)). An FYVE-type zinc finger spans residues 88–145 (GDGVNRCILCGEQLGMLGSACVVCEDCKKNVCTKCGVETSNNRPHPVWLCKICLEQRE). Residues cysteine 94, cysteine 97, cysteine 111, cysteine 114, cysteine 119, cysteine 122, cysteine 137, and cysteine 140 each coordinate Zn(2+). The disordered stretch occupies residues 162–375 (VLPQPMPIKK…EEEANSYDSD (214 aa)). Basic and acidic residues predominate over residues 199–208 (ARGDMEDRRP). Arginine 223 is subject to Omega-N-methylarginine. Positions 243–252 (RDSEGWDHAH) are enriched in basic and acidic residues. At serine 271 the chain carries Phosphoserine. Residues 278–296 (APAPVPSPAPPQPVQPGPP) show a composition bias toward pro residues. Low complexity predominate over residues 347–356 (AAPYSQAAPA). Residues 362–375 (AEEEEEEANSYDSD) show a composition bias toward acidic residues. The 123-residue stretch at 379–501 (TLGALEFSLL…KANQRKNFNI (123 aa)) folds into the C2 1 domain. 14 residues coordinate Ca(2+): methionine 409, aspartate 410, aspartate 416, aspartate 471, glutamate 472, aspartate 473, glutamate 479, glutamate 526, aspartate 568, aspartate 574, aspartate 628, tyrosine 629, aspartate 630, and aspartate 636. The C2 2 domain occupies 537–670 (ERGKILVSLM…NKDKKIERWH (134 aa)). A phosphoserine mark is found at serine 679 and serine 680.

In terms of assembly, interacts with RAB3B, RAB3C, RAB3D, RAB8A, RAB27A and RAB27B. Interacts with RAB3A; this interaction recruits RPH3A to synaptic vesicules. Interacts (via C2B domain) with SNAP25. Interacts with deubiquitinating enzyme CAND1; this interaction results in the deubiquitination of RPH3A. Interacts with GRIN2A and DLG4; this ternary complex regulates NMDA receptor composition at postsynaptic membranes. Interacts with SNCA. Ca(2+) is required as a cofactor. Ubiquitinated. Deubiquitinated by CAND1 to prevent its degradation. In terms of tissue distribution, specifically expressed in brain.

The protein resides in the cytoplasmic vesicle. It is found in the secretory vesicle. It localises to the synaptic vesicle membrane. The protein localises to the cell projection. Its subcellular location is the dendritic spine. The protein resides in the postsynaptic cell membrane. It is found in the membrane. In terms of biological role, plays an essential role in docking and fusion steps of regulated exocytosis. At the presynaptic level, RPH3A is recruited by RAB3A to the synaptic vesicle membrane in a GTP-dependent manner where it modulates synaptic vesicle trafficking and calcium-triggered neurotransmitter release. In the post-synaptic compartment, forms a ternary complex with GRIN2A and DLG4 and regulates NMDA receptor stability. Also plays a role in the exocytosis of arginine vasopressin hormone. The protein is Rabphilin-3A (Rph3a) of Mus musculus (Mouse).